We begin with the raw amino-acid sequence, 239 residues long: Pyridoxine 5'-phosphate synthase (239 aa).

A 3-amino-2-oxopropyl phosphate-binding site is contributed by Asn7. 9–10 (DH) contributes to the 1-deoxy-D-xylulose 5-phosphate binding site. Arg18 lines the 3-amino-2-oxopropyl phosphate pocket. His43 acts as the Proton acceptor in catalysis. Residues Arg45 and His50 each coordinate 1-deoxy-D-xylulose 5-phosphate. The active-site Proton acceptor is the Glu70. Thr100 contributes to the 1-deoxy-D-xylulose 5-phosphate binding site. Catalysis depends on His191, which acts as the Proton donor. Residues Gly192 and 213–214 (GH) contribute to the 3-amino-2-oxopropyl phosphate site.

It belongs to the PNP synthase family. In terms of assembly, homooctamer; tetramer of dimers.

The protein localises to the cytoplasm. It catalyses the reaction 3-amino-2-oxopropyl phosphate + 1-deoxy-D-xylulose 5-phosphate = pyridoxine 5'-phosphate + phosphate + 2 H2O + H(+). The protein operates within cofactor biosynthesis; pyridoxine 5'-phosphate biosynthesis; pyridoxine 5'-phosphate from D-erythrose 4-phosphate: step 5/5. Its function is as follows. Catalyzes the complicated ring closure reaction between the two acyclic compounds 1-deoxy-D-xylulose-5-phosphate (DXP) and 3-amino-2-oxopropyl phosphate (1-amino-acetone-3-phosphate or AAP) to form pyridoxine 5'-phosphate (PNP) and inorganic phosphate. The polypeptide is Pyridoxine 5'-phosphate synthase (Trichormus variabilis (strain ATCC 29413 / PCC 7937) (Anabaena variabilis)).